Consider the following 275-residue polypeptide: NAD kinase (275 aa).

The Proton acceptor role is filled by Asp66. NAD(+) is bound by residues Asp66–Gly67, Asn138–Glu139, His168, Asp170, Thr181–Ser186, and Val205.

Belongs to the NAD kinase family. A divalent metal cation serves as cofactor.

It localises to the cytoplasm. It carries out the reaction NAD(+) + ATP = ADP + NADP(+) + H(+). Its function is as follows. Involved in the regulation of the intracellular balance of NAD and NADP, and is a key enzyme in the biosynthesis of NADP. Catalyzes specifically the phosphorylation on 2'-hydroxyl of the adenosine moiety of NAD to yield NADP. This is NAD kinase from Halorubrum lacusprofundi (strain ATCC 49239 / DSM 5036 / JCM 8891 / ACAM 34).